The sequence spans 320 residues: Ferrochelatase (320 aa).

2 residues coordinate Fe cation: His194 and Glu275.

Belongs to the ferrochelatase family.

The protein localises to the cytoplasm. It carries out the reaction heme b + 2 H(+) = protoporphyrin IX + Fe(2+). It participates in porphyrin-containing compound metabolism; protoheme biosynthesis; protoheme from protoporphyrin-IX: step 1/1. Its function is as follows. Catalyzes the ferrous insertion into protoporphyrin IX. The sequence is that of Ferrochelatase from Xylella fastidiosa (strain 9a5c).